We begin with the raw amino-acid sequence, 480 residues long: MGYSFDRASKDVVKKLQGRDLRPVECLSDATKFRLFHILQETPRSGWETEDIPVGFTLLDLLEPNFPVPEPEVSAPKPFIHVQSTDLEANLNVADIARGGVGYVGYGGYNIEVQSTSIPNPKLEILQNRKLLDKLPTFMKFCRMERKNLYVVTEAYEVSKDTMLTGLSSVNLLVKGFFKQLFKVRGKAGRSEKYSIPIPKGSVLAYKKQQLVIENNTCVILPSATKKKMTFPDRPLKLYDLPVTLRYQEEVIETGSWIDDIDPIGTIEEPANLNFMCLQHEVSEQTQLLAELSKDVQEVVFSSFLHMLSDRDVLYDLMKMLELNQLGHMDGPGGKILDELRKDSSTPHDVLKDLNLYLLQALLVLSDTQLCLLAQSVKMGLLPHQVELVKSILQTNFKYSSNTPFTLQPQLLAPLQGEGLAITYELLEECGLKMELNNPRSTWDLEAKMPLSALYGSLSFLQQLQKANSSSKPSLSPGYI.

The triggers pyroptosis stretch occupies residues 1 to 226; that stretch reads MGYSFDRASK…TCVILPSATK (226 aa).

The protein belongs to the gasdermin family. Homooligomer; homooligomeric ring-shaped pore complex containing 27-28 subunits when inserted in the membrane. Post-translationally, cleavage by CASP8 relieves autoinhibition by releasing the N-terminal moiety (Gasdermin-C4, N-terminal) that initiates pyroptosis. In terms of processing, palmitoylated.

It localises to the cytoplasm. The protein resides in the cytosol. The protein localises to the cell membrane. With respect to regulation, the full-length protein before cleavage is inactive: intramolecular interactions between N- and C-terminal domains mediate autoinhibition in the absence of activation signal. The intrinsic pyroptosis-inducing activity is carried by the released N-terminal moiety (Gasdermin-C4, N-terminal) following cleavage by caspase CASP8. Functionally, this form constitutes the precursor of the pore-forming protein: upon cleavage, the released N-terminal moiety (Gasdermin-C4, N-terminal) binds to membranes and forms pores, triggering pyroptosis. In terms of biological role, pore-forming protein that causes membrane permeabilization and pyroptosis. Produced by the cleavage of gasdermin-C4 by caspase CASP8 in response to death signals. After cleavage, moves to the plasma membrane where it strongly binds to membrane inner leaflet lipids. Homooligomerizes within the membrane and forms pores of 10-15 nanometers (nm) of inner diameter, triggering pyroptosis. This is Gasdermin-C4 from Mus musculus (Mouse).